The sequence spans 199 residues: Nicotinamide riboside kinase 1 (199 aa).

10–18 (GVTNSGKTT) contacts ATP. Mg(2+)-binding residues include Thr-17 and Asp-36. Asp-36 functions as the Proton acceptor in the catalytic mechanism. Substrate-binding positions include 36-39 (DDFF) and 55-56 (YD). Residue Arg-128 participates in ATP binding. Substrate contacts are provided by residues Arg-129 and 134 to 135 (YQ). Residues 132-134 (RVY) and 172-174 (KSE) each bind ATP.

The protein belongs to the uridine kinase family. NRK subfamily. Monomer.

It carries out the reaction beta-nicotinamide D-riboside + ATP = beta-nicotinamide D-ribonucleotide + ADP + H(+). The enzyme catalyses beta-D-ribosylnicotinate + ATP = nicotinate beta-D-ribonucleotide + ADP + H(+). It functions in the pathway cofactor biosynthesis; NAD(+) biosynthesis. In terms of biological role, catalyzes the phosphorylation of nicotinamide riboside (NR) and nicotinic acid riboside (NaR) to form nicotinamide mononucleotide (NMN) and nicotinic acid mononucleotide (NaMN). The enzyme also phosphorylates the antitumor drugs tiazofurin and 3-deazaguanosine. This Homo sapiens (Human) protein is Nicotinamide riboside kinase 1 (NMRK1).